We begin with the raw amino-acid sequence, 277 residues long: Venom serine protease (277 aa).

Positions 1–19 (MNCGKIILLFITIIGVAKS) are cleaved as a signal peptide. The 236-residue stretch at 34–269 (IVNGVETEIN…FMEFIHNATI (236 aa)) folds into the Peptidase S1 domain. The cysteines at positions 60 and 76 are disulfide-linked. The Charge relay system role is filled by His75. N-linked (GlcNAc...) asparagine glycosylation is found at Asn84 and Asn104. Residue Asp126 is the Charge relay system of the active site. 2 N-linked (GlcNAc...) asparagine glycosylation sites follow: Asn155 and Asn158. Intrachain disulfides connect Cys192–Cys207 and Cys216–Cys246. The N-linked (GlcNAc...) asparagine glycan is linked to Asn218. The Charge relay system role is filled by Ser220. N-linked (GlcNAc...) asparagine glycosylation occurs at Asn266.

Belongs to the peptidase S1 family. As to expression, expressed by the venom duct.

It localises to the secreted. The polypeptide is Venom serine protease (Polistes dominula (European paper wasp)).